Reading from the N-terminus, the 166-residue chain is Large ribosomal subunit protein uL10 (166 aa).

It belongs to the universal ribosomal protein uL10 family. In terms of assembly, part of the ribosomal stalk of the 50S ribosomal subunit. The N-terminus interacts with L11 and the large rRNA to form the base of the stalk. The C-terminus forms an elongated spine to which L12 dimers bind in a sequential fashion forming a multimeric L10(L12)X complex.

Forms part of the ribosomal stalk, playing a central role in the interaction of the ribosome with GTP-bound translation factors. In Stutzerimonas stutzeri (strain A1501) (Pseudomonas stutzeri), this protein is Large ribosomal subunit protein uL10.